Reading from the N-terminus, the 897-residue chain is Ubiquitin carboxyl-terminal hydrolase 33 (897 aa).

The segment at 7–110 (NDCPHLECVG…KQLPNAAKAV (104 aa)) adopts a UBP-type zinc-finger fold. Residues C9, H11, C31, C34, C44, C49, C54, H61, H65, H71, C84, and C87 each contribute to the Zn(2+) site. The USP domain maps to 156-670 (TGLKNIGNTC…EAYVLFYKKS (515 aa)). C165 (nucleophile) is an active-site residue. 2 disordered regions span residues 261–308 (LIPE…GPRV) and 343–420 (GSHG…HKKV). Over residues 287 to 297 (DDFQSCESCGS) the composition is skewed to polar residues. Basic and acidic residues-rich tracts occupy residues 299 to 308 (DRADNEGPRV) and 344 to 353 (SHGDLDKDVD). Polar residues predominate over residues 355-396 (TSDSRPIISSQGAIKAQGRTSDSEIQVSSTVRPQSPTGNEGI). The span at 398–411 (SRLSSSPPKSSAWP) shows a compositional bias: low complexity. H628 acts as the Proton acceptor in catalysis. DUSP domains lie at 672 to 765 (DETQ…LYVC) and 773 to 876 (EKLE…RPSV). The span at 875 to 884 (SVSHQESETS) shows a compositional bias: low complexity. Positions 875–897 (SVSHQESETSQSEEKIEVETRTV) are disordered. The span at 886–897 (SEEKIEVETRTV) shows a compositional bias: basic and acidic residues.

The protein belongs to the peptidase C19 family. USP20/USP33 subfamily.

It is found in the cytoplasm. Its subcellular location is the perinuclear region. The protein localises to the cytoskeleton. It localises to the microtubule organizing center. The protein resides in the centrosome. It catalyses the reaction Thiol-dependent hydrolysis of ester, thioester, amide, peptide and isopeptide bonds formed by the C-terminal Gly of ubiquitin (a 76-residue protein attached to proteins as an intracellular targeting signal).. In terms of biological role, deubiquitinating enzyme involved in various processes such as centrosome duplication, cellular migration and beta-2 adrenergic receptor/ADRB2 recycling. Involved in regulation of centrosome duplication by mediating deubiquitination of ccp110 in S and G2/M phase, leading to stabilize ccp110 during the period which centrioles duplicate and elongate. Involved in cell migration via its interaction with intracellular domain of robo1, leading to regulate the Slit signaling. Plays a role in commissural axon guidance cross the ventral midline of the neural tube in a Slit-dependent manner, possibly by mediating the deubiquitination of robo1. Acts as a regulator of G-protein coupled receptor (GPCR) signaling by mediating the deubiquitination of beta-arrestins (arrb1 and arrb2) and beta-2 adrenergic receptor (adrb2). Deubiquitinates dio2, thereby regulating thyroid hormone regulation. Mediates deubiquitination of both 'Lys-48'- and 'Lys-63'-linked polyubiquitin chains. The chain is Ubiquitin carboxyl-terminal hydrolase 33 (usp33) from Danio rerio (Zebrafish).